The primary structure comprises 418 residues: Deubiquitinase and deneddylase Dub1 (418 aa).

Positions 1 to 11 are enriched in polar residues; it reads MLSPTNSTSKT. A disordered region spans residues 1–23; sequence MLSPTNSTSKTAPVPPQDSSKPV. A helical transmembrane segment spans residues 40 to 60; that stretch reads TALVVLLVVVTLGLILLFYSF. A disordered region spans residues 72–145; sequence TRPSTKEQPT…LPPKAPKPVK (74 aa). Pro residues predominate over residues 86-141; it reads VPLPSPPLAVPRPSTPPPPVISRPSMPPAPTPAISPPSTPSAPKPSTPPPLPPKAP. Catalysis depends on residues His-288, Asp-305, and Cys-358.

It belongs to the peptidase C48 family.

Its subcellular location is the secreted. It is found in the host cell. The protein resides in the membrane. Functionally, effector proteins function to alter host cell physiology and promote bacterial survival in host tissues. This protease possesses deubiquitinating and deneddylating activities. The protein is Deubiquitinase and deneddylase Dub1 (cdu1) of Chlamydia trachomatis serovar E (strain Sweden2).